The sequence spans 1034 residues: Potassium-transporting ATPase alpha chain 1 (1034 aa).

At 1 to 97 the chain is on the cytoplasmic side; sequence MGKAENYEMY…NALRPPRGTP (97 aa). 2 positions are modified to phosphotyrosine: Tyr-7 and Tyr-10. The interval 14–41 is disordered; it reads LGPGPGGDMAAKMSKKKAGKGGGKKKEK. The segment covering 26 to 39 has biased composition (basic residues); that stretch reads MSKKKAGKGGGKKK. Ser-27 carries the phosphoserine modification. A helical transmembrane segment spans residues 98-118; sequence EYVKFARQLAGGLQCLMWVAA. Topologically, residues 119 to 141 are lumenal; it reads AICLIAFAIQASEGDLTTDDNLY. A helical transmembrane segment spans residues 142 to 162; sequence LALALIAVVVVTGCFGYYQEF. The Cytoplasmic segment spans residues 163–298; sequence KSTNIIASFK…NEKTPIAIEI (136 aa). A compositionally biased stretch (polar residues) spans 225-239; that stretch reads NSSLTGESEPQTRSP. The disordered stretch occupies residues 225–245; sequence NSSLTGESEPQTRSPECTHES. Residues 299–318 traverse the membrane as a helical segment; that stretch reads EHFVDIIAGLAILFGATFFV. Residues 319–330 are Lumenal-facing; it reads VAMCIGYTFLRA. The helical transmembrane segment at 331–348 threads the bilayer; sequence MVFFMAIVVAYVPEGLLA. K(+) is bound by residues Val-339, Ala-340, Val-342, and Glu-344. The Cytoplasmic portion of the chain corresponds to 349 to 782; the sequence is TVTVCLSLTA…EQGRLIFDNL (434 aa). Residue Asp-386 is the 4-aspartylphosphate intermediate of the active site. Residues Asp-386 and Thr-388 each coordinate Mg(2+). A phosphoserine mark is found at Ser-462 and Ser-600. Mg(2+) contacts are provided by Asp-727 and Asp-731. A helical transmembrane segment spans residues 783 to 802; sequence KKSIAYTLTKNIPELTPYLI. K(+) is bound at residue Glu-796. Residues 803–812 are Lumenal-facing; the sequence is YITVSVPLPL. The helical transmembrane segment at 813–833 threads the bilayer; it reads GCITILFIELCTDIFPSVSLA. Glu-821 serves as a coordination point for K(+). Residues 834–853 are Cytoplasmic-facing; the sequence is YEKAESDIMHLRPRNPKRDR. Ser-839 is subject to Phosphoserine. A helical transmembrane segment spans residues 854-876; that stretch reads LVNEPLAAYSYFQIGAIQSFAGF. Over 877–928 the chain is Lumenal; the sequence is TDYFTAMAQEGWFPLLCVGLRPYWENHHLQDLQDSYGQEWTFGQRLYQQYTC. A helical membrane pass occupies residues 929–948; that stretch reads YTVFFISIEMCQIADVLIRK. Over 949-962 the chain is Cytoplasmic; sequence TRRLSAFQQGFFRN. Residue Ser-953 is modified to Phosphoserine; by PKA. Residues 963–981 form a helical membrane-spanning segment; sequence RILVIAIVFQVCIGCFLCY. The Lumenal portion of the chain corresponds to 982-996; sequence CPGMPNIFNFMPIRY. A helical transmembrane segment spans residues 997-1017; the sequence is QWWLVPMPFGLLIFVYDEIRK. The Cytoplasmic portion of the chain corresponds to 1018–1034; sequence LGVRCCPGSWWDQELYY.

It belongs to the cation transport ATPase (P-type) (TC 3.A.3) family. Type IIC subfamily. The gastric H(+)/K(+) ATPase pump is composed of the catalytic alpha subunit ATP4A and the regulatory beta subunit ATP4B. Interacts (via the P-domain) with ATP4B (via N-terminus); this interaction stabilizes the lumenal-open E2 conformation state and prevents the reverse reaction of the transport cycle.

It is found in the apical cell membrane. It catalyses the reaction K(+)(out) + ATP + H2O + H(+)(in) = K(+)(in) + ADP + phosphate + 2 H(+)(out). In terms of biological role, the catalytic subunit of the gastric H(+)/K(+) ATPase pump which transports H(+) ions in exchange for K(+) ions across the apical membrane of parietal cells. Uses ATP as an energy source to pump H(+) ions to the gastric lumen while transporting K(+) ion from the lumen into the cell. Remarkably generates a million-fold proton gradient across the gastric parietal cell membrane, acidifying the gastric juice down to pH 1. Within a transport cycle, the transfer of a H(+) ion across the membrane is coupled to ATP hydrolysis and is associated with a transient phosphorylation that shifts the pump conformation from inward-facing (E1) to outward-facing state (E2). The release of the H(+) ion in the stomach lumen is followed by binding of K(+) ion converting the pump conformation back to the E1 state. This Canis lupus familiaris (Dog) protein is Potassium-transporting ATPase alpha chain 1 (ATP4A).